The following is a 281-amino-acid chain: DegV domain-containing protein CPE2509 (281 aa).

A DegV domain is found at 4–279 (IAIITDSSCD…PGMVGVSIQK (276 aa)). 2 residues coordinate hexadecanoate: threonine 60 and serine 93.

In terms of biological role, may bind long-chain fatty acids, such as palmitate, and may play a role in lipid transport or fatty acid metabolism. This is DegV domain-containing protein CPE2509 from Clostridium perfringens (strain 13 / Type A).